The following is a 374-amino-acid chain: N5-carboxyaminoimidazole ribonucleotide synthase (374 aa).

ATP contacts are provided by residues Arg-108, Lys-148, 153 to 159, 183 to 186, Glu-191, His-214, and 266 to 267; these read GYDGKGQ, EQFL, and NE. The ATP-grasp domain maps to 112 to 296; sequence KQTLQKAGSK…QFDTHILAVT (185 aa).

This sequence belongs to the PurK/PurT family. In terms of assembly, homodimer.

The enzyme catalyses 5-amino-1-(5-phospho-beta-D-ribosyl)imidazole + hydrogencarbonate + ATP = 5-carboxyamino-1-(5-phospho-D-ribosyl)imidazole + ADP + phosphate + 2 H(+). Its pathway is purine metabolism; IMP biosynthesis via de novo pathway; 5-amino-1-(5-phospho-D-ribosyl)imidazole-4-carboxylate from 5-amino-1-(5-phospho-D-ribosyl)imidazole (N5-CAIR route): step 1/2. In terms of biological role, catalyzes the ATP-dependent conversion of 5-aminoimidazole ribonucleotide (AIR) and HCO(3)(-) to N5-carboxyaminoimidazole ribonucleotide (N5-CAIR). This Staphylococcus haemolyticus (strain JCSC1435) protein is N5-carboxyaminoimidazole ribonucleotide synthase.